Reading from the N-terminus, the 388-residue chain is Mannosyl-3-phosphoglycerate synthase (388 aa).

The protein belongs to the glycosyltransferase 2 family.

It is found in the cytoplasm. The enzyme catalyses (2R)-3-phosphoglycerate + GDP-alpha-D-mannose = 2-O-(alpha-D-mannosyl)-3-phosphoglycerate + GDP + H(+). It participates in carbohydrate biosynthesis; 2-(alpha-D-mannosyl)-D-glycerate biosynthesis; 2-(alpha-D-mannosyl)-D-glycerate from GDP-alpha-D-mannose (MPG route): step 1/2. Its function is as follows. Transfers a mannosyl group from GDP-mannose to phosphoglycerate to form mannosyl-3-phosphoglycerate (MPG). The sequence is that of Mannosyl-3-phosphoglycerate synthase (mngA) from Aeropyrum pernix (strain ATCC 700893 / DSM 11879 / JCM 9820 / NBRC 100138 / K1).